The following is a 241-amino-acid chain: Gamma-interferon-inducible lysosomal thiol reductase-like protein (241 aa).

The N-terminal stretch at 1–18 (MLFKSLLLLSVYAVTCYG) is a signal peptide. N-linked (GlcNAc...) asparagine glycosylation is found at Asn-105 and Asn-152. The helical transmembrane segment at 218 to 235 (STGSAISSLGMIVTVVAV) threads the bilayer.

Belongs to the GILT family. Salivary gland (at protein level). Low-level expression in midgut (at protein level). Expressed in head and leg tissues. Ovary. Fat body. In terms of tissue distribution, (Microbial infection) Detected with Plasmodium berghei sporozoites isolated from the saliva of infected Anopheles gambiae mosquitoes (at protein level).

The protein localises to the membrane. In terms of biological role, required for normal development of ovary and testis. (Microbial infection) Interacts with the surface of Plasmodium berghei sporozoites. Reduces P.berghei sporozoite cell traversal activity and transmission. Limits the motility of P.berghei sporozoites. Decreases the levels of host liver infection by P.berghei sporozoites. Does not affect P.berghei sporozoite viability. Indirectly promotes P.berghei survival in mosquitoes by influencing ovarian development and the subsequent production of 20-hydroxyecdysone and vitellogenin, which, in turn, modulates TEP1-dependent parasite killing. Promotes P.berghei infection in mosquitoes, most likely impacting the oocyst stage of parasite development. Its function is as follows. (Microbial infection) Promotes Plasmodium falciparum survival in mosquitoes. In Anopheles gambiae (African malaria mosquito), this protein is Gamma-interferon-inducible lysosomal thiol reductase-like protein.